Reading from the N-terminus, the 688-residue chain is NADH-ubiquinone oxidoreductase 75 kDa subunit (688 aa).

Positions M1 to E85 constitute a 2Fe-2S ferredoxin-type domain. The [2Fe-2S] cluster site is built by C38, C49, C52, and C66. The 40-residue stretch at E85–G124 folds into the 4Fe-4S His(Cys)3-ligated-type domain. [4Fe-4S] cluster-binding residues include H101, C105, C108, C114, C153, C156, C159, and C204. The 4Fe-4S Mo/W bis-MGD-type domain occupies L223–E279.

This sequence belongs to the complex I 75 kDa subunit family. Complex I is composed of about 45 different subunits. It depends on [2Fe-2S] cluster as a cofactor. [4Fe-4S] cluster serves as cofactor.

The protein resides in the mitochondrion inner membrane. It carries out the reaction a ubiquinone + NADH + 5 H(+)(in) = a ubiquinol + NAD(+) + 4 H(+)(out). Functionally, core subunit of the mitochondrial membrane respiratory chain NADH dehydrogenase (Complex I) that is believed to belong to the minimal assembly required for catalysis. Complex I functions in the transfer of electrons from NADH to the respiratory chain. The immediate electron acceptor for the enzyme is believed to be ubiquinone. This is the largest subunit of complex I and it is a component of the iron-sulfur (IP) fragment of the enzyme. It may form part of the active site crevice where NADH is oxidized. The polypeptide is NADH-ubiquinone oxidoreductase 75 kDa subunit (nad11) (Dictyostelium citrinum (Slime mold)).